Consider the following 154-residue polypeptide: SsrA-binding protein (154 aa).

Positions 134-154 are disordered; the sequence is QREDLKRRAEDRDTQRELARF.

Belongs to the SmpB family.

It localises to the cytoplasm. Required for rescue of stalled ribosomes mediated by trans-translation. Binds to transfer-messenger RNA (tmRNA), required for stable association of tmRNA with ribosomes. tmRNA and SmpB together mimic tRNA shape, replacing the anticodon stem-loop with SmpB. tmRNA is encoded by the ssrA gene; the 2 termini fold to resemble tRNA(Ala) and it encodes a 'tag peptide', a short internal open reading frame. During trans-translation Ala-aminoacylated tmRNA acts like a tRNA, entering the A-site of stalled ribosomes, displacing the stalled mRNA. The ribosome then switches to translate the ORF on the tmRNA; the nascent peptide is terminated with the 'tag peptide' encoded by the tmRNA and targeted for degradation. The ribosome is freed to recommence translation, which seems to be the essential function of trans-translation. This Nitratidesulfovibrio vulgaris (strain ATCC 29579 / DSM 644 / CCUG 34227 / NCIMB 8303 / VKM B-1760 / Hildenborough) (Desulfovibrio vulgaris) protein is SsrA-binding protein.